We begin with the raw amino-acid sequence, 85 residues long: Phycobilisome 9.7 kDa linker polypeptide, phycocyanin-associated, rod (85 aa).

The CpcD-like domain occupies 16–74 (NRVFVYEVEGLRQNEQTDNNRYQIRNSSTIEIQVPYSRMNEEDRRITRLGGRIVNIRPA).

The protein belongs to the phycobilisome linker protein family.

It localises to the cellular thylakoid membrane. In terms of biological role, rod linker protein, associated with phycocyanin. Linker polypeptides determine the state of aggregation and the location of the disk-shaped phycobiliprotein units within the phycobilisome and modulate their spectroscopic properties in order to mediate a directed and optimal energy transfer. The polypeptide is Phycobilisome 9.7 kDa linker polypeptide, phycocyanin-associated, rod (cpcD2) (Microchaete diplosiphon (Fremyella diplosiphon)).